A 217-amino-acid chain; its full sequence is LexA repressor (217 aa).

The segment at residues 28–48 (RAEIAAEFGFSSPNAAEEHLR) is a DNA-binding region (H-T-H motif). Active-site for autocatalytic cleavage activity residues include Ser-136 and Lys-173.

Belongs to the peptidase S24 family. Homodimer.

It carries out the reaction Hydrolysis of Ala-|-Gly bond in repressor LexA.. Represses a number of genes involved in the response to DNA damage (SOS response), including recA and lexA. In the presence of single-stranded DNA, RecA interacts with LexA causing an autocatalytic cleavage which disrupts the DNA-binding part of LexA, leading to derepression of the SOS regulon and eventually DNA repair. This chain is LexA repressor, found in Cupriavidus taiwanensis (strain DSM 17343 / BCRC 17206 / CCUG 44338 / CIP 107171 / LMG 19424 / R1) (Ralstonia taiwanensis (strain LMG 19424)).